The chain runs to 102 residues: Large ribosomal subunit protein uL24 (102 aa).

It belongs to the universal ribosomal protein uL24 family. As to quaternary structure, part of the 50S ribosomal subunit.

Functionally, one of two assembly initiator proteins, it binds directly to the 5'-end of the 23S rRNA, where it nucleates assembly of the 50S subunit. In terms of biological role, one of the proteins that surrounds the polypeptide exit tunnel on the outside of the subunit. The chain is Large ribosomal subunit protein uL24 from Limosilactobacillus fermentum (strain NBRC 3956 / LMG 18251) (Lactobacillus fermentum).